Here is a 278-residue protein sequence, read N- to C-terminus: Undecaprenyl-diphosphatase 2 (278 aa).

Helical transmembrane passes span 43 to 63, 88 to 108, 119 to 139, 149 to 169, 194 to 214, 226 to 246, and 254 to 274; these read GAAF…VYFW, ARLG…GLFF, LYIT…ADRI, LIWR…IPGV, FLLA…KSIG, LATL…LKLV, and FVWY…TGVI.

This sequence belongs to the UppP family.

It localises to the cell inner membrane. It carries out the reaction di-trans,octa-cis-undecaprenyl diphosphate + H2O = di-trans,octa-cis-undecaprenyl phosphate + phosphate + H(+). Catalyzes the dephosphorylation of undecaprenyl diphosphate (UPP). Confers resistance to bacitracin. The polypeptide is Undecaprenyl-diphosphatase 2 (Agrobacterium fabrum (strain C58 / ATCC 33970) (Agrobacterium tumefaciens (strain C58))).